Consider the following 1522-residue polypeptide: Adhesion G protein-coupled receptor B3 (1522 aa).

An N-terminal signal peptide occupies residues 1-25; the sequence is MKAVRNLLIYIFSTYLLVMFGFNAA. Topologically, residues 26–880 are extracellular; sequence QDFWCSTLVK…MESSGTPSVT (855 aa). In terms of domain architecture, CUB spans 30 to 159; the sequence is CSTLVKGVIY…KSFFEFLVLN (130 aa). Residues asparagine 51, asparagine 54, asparagine 82, asparagine 105, and asparagine 241 are each glycosylated (N-linked (GlcNAc...) asparagine). 4 TSP type-1 domains span residues 291-343, 345-398, 400-453, and 455-508; these read ESGV…ALCP, HGVW…ALCP, DGQW…PECT, and NGQW…QRCP. Cystine bridges form between cysteine 303/cysteine 336, cysteine 307/cysteine 342, cysteine 318/cysteine 326, cysteine 357/cysteine 392, cysteine 361/cysteine 397, cysteine 372/cysteine 382, cysteine 412/cysteine 447, cysteine 416/cysteine 452, cysteine 427/cysteine 437, cysteine 467/cysteine 502, cysteine 471/cysteine 507, cysteine 482/cysteine 492, cysteine 514/cysteine 549, and cysteine 537/cysteine 567. Asparagine 337 carries N-linked (GlcNAc...) asparagine glycosylation. N-linked (GlcNAc...) asparagine glycosylation occurs at asparagine 418. N-linked (GlcNAc...) asparagine glycosylation is present at asparagine 540. Serine 619 is subject to Phosphoserine. N-linked (GlcNAc...) asparagine glycans are attached at residues asparagine 625, asparagine 779, asparagine 812, and asparagine 828. A GAIN-B domain is found at 693–869; that stretch reads QNSYLMTGNV…AILAQQPREI (177 aa). 2 disulfides stabilise this stretch: cysteine 819-cysteine 851 and cysteine 839-cysteine 853. Residues 819 to 869 are GPS; that stretch reads CVLWDDSKSNESLGTWSTQGCKTVLTDASHTKCLCDRLSTFAILAQQPREI. A helical transmembrane segment spans residues 881-901; it reads LIVGSGLSCLALITLAVVYAA. At 902 to 910 the chain is on the cytoplasmic side; the sequence is LWRYIRSER. Residues 911–931 form a helical membrane-spanning segment; it reads SIILINFCLSIISSNILILVG. Over 932-939 the chain is Extracellular; the sequence is QTQTHNKS. A glycan (N-linked (GlcNAc...) asparagine) is linked at asparagine 937. A helical transmembrane segment spans residues 940–960; that stretch reads ICTTTTAFLHFFFLASFCWVL. Residues 961 to 981 are Cytoplasmic-facing; sequence TEAWQSYMAVTGKIRTRLIRK. Residues 982-1002 traverse the membrane as a helical segment; the sequence is RFLCLGWGLPALVVATSVGFT. The Extracellular segment spans residues 1003–1023; sequence RTKGYGTDHYCWLSLEGGLLY. A helical membrane pass occupies residues 1024 to 1044; it reads AFVGPAAAVVLVNMVIGILVF. Residues 1045–1098 are Cytoplasmic-facing; that stretch reads NKLVSRDGILDKKLKHRAGQMSEPHSGLTLKCAKCGVVSTTALSATTASNAMAS. A helical transmembrane segment spans residues 1099–1119; that stretch reads LWSSCVVLPLLALTWMSAVLA. The Extracellular portion of the chain corresponds to 1120 to 1125; sequence MTDKRS. A helical membrane pass occupies residues 1126–1146; that stretch reads ILFQILFAVFDSLQGFVIVMV. The Cytoplasmic segment spans residues 1147–1522; the sequence is HCILRREVQD…VQEGDFQTEV (376 aa). Residues serine 1220 and serine 1411 each carry the phosphoserine modification.

It belongs to the G-protein coupled receptor 2 family. Adhesion G-protein coupled receptor (ADGR) subfamily. Forms a heterodimer, consisting of a large extracellular region non-covalently linked to a seven-transmembrane moiety. Interacts (via its TSRs) with C1QL1, C1QL2, C1QL3 and C1QL4. Interacts via (C-terminus) with ELMO1, ELMO2 and ELMO3. Post-translationally, the endogenous protein is proteolytically cleaved into 2 subunits, an extracellular subunit and a seven-transmembrane subunit. In terms of tissue distribution, brain-specific expression.

The protein localises to the cell membrane. Receptor that plays a role in the regulation of synaptogenesis and dendritic spine formation at least partly via interaction with ELMO1 and RAC1 activity. Promotes myoblast fusion through ELMO/DOCK1. This Mus musculus (Mouse) protein is Adhesion G protein-coupled receptor B3 (Adgrb3).